The primary structure comprises 331 residues: Glycerol-3-phosphate dehydrogenase [NAD(P)+] (331 aa).

NADPH is bound by residues serine 10, tryptophan 11, arginine 31, arginine 32, and lysine 105. 2 residues coordinate sn-glycerol 3-phosphate: lysine 105 and glycine 135. An NADPH-binding site is contributed by alanine 139. Lysine 190, aspartate 243, serine 253, arginine 254, and asparagine 255 together coordinate sn-glycerol 3-phosphate. The active-site Proton acceptor is lysine 190. Arginine 254 provides a ligand contact to NADPH. Residues valine 279 and glutamate 281 each coordinate NADPH.

The protein belongs to the NAD-dependent glycerol-3-phosphate dehydrogenase family.

The protein resides in the cytoplasm. The enzyme catalyses sn-glycerol 3-phosphate + NAD(+) = dihydroxyacetone phosphate + NADH + H(+). The catalysed reaction is sn-glycerol 3-phosphate + NADP(+) = dihydroxyacetone phosphate + NADPH + H(+). The protein operates within membrane lipid metabolism; glycerophospholipid metabolism. Its function is as follows. Catalyzes the reduction of the glycolytic intermediate dihydroxyacetone phosphate (DHAP) to sn-glycerol 3-phosphate (G3P), the key precursor for phospholipid synthesis. The chain is Glycerol-3-phosphate dehydrogenase [NAD(P)+] from Corynebacterium diphtheriae (strain ATCC 700971 / NCTC 13129 / Biotype gravis).